A 382-amino-acid chain; its full sequence is MSLKEKTQSLFAEIFGYPATHTIQAPGRVNLIGEHTDYNDGFVLPCAIDYQTVISCATRDDRKVRVIAADYDNQVDEFSLDAPIVTHDSQQWSNYVRGVVKHLQKRNNAFGGADLVISGNVPQGAGLSSSASLEVAVGTVFQQLYHLPLDGAQIALNGQEAENQFVGCNCGIMDQLISALGKKDHALLIDCRTLGTKAVSMPEGVAVVIINSNFKRTLVGSEYNTRREQCETGARFFQQPALRDVSLAAFNAVASELDPIVAKRVRHVLTENARTVEAASALEKGDLKRMGELMAESHASMRDDFEITVPQIDTLVEIVKATIGDKGGVRMTGGGFGGCVVALLPEALVPAVQQAVATQYEAKTGIKETFYVCKPSQGAGQC.

34-37 (EHTD) is a substrate binding site. Residue 124-130 (GAGLSSS) coordinates ATP. The Mg(2+) site is built by Ser-130 and Glu-162. The Proton acceptor role is filled by Asp-174. Residue Tyr-223 participates in substrate binding.

Belongs to the GHMP kinase family. GalK subfamily.

It is found in the cytoplasm. The catalysed reaction is alpha-D-galactose + ATP = alpha-D-galactose 1-phosphate + ADP + H(+). It participates in carbohydrate metabolism; galactose metabolism. In terms of biological role, catalyzes the transfer of the gamma-phosphate of ATP to D-galactose to form alpha-D-galactose-1-phosphate (Gal-1-P). In Citrobacter koseri (strain ATCC BAA-895 / CDC 4225-83 / SGSC4696), this protein is Galactokinase.